Reading from the N-terminus, the 65-residue chain is Large ribosomal subunit protein uL29 (65 aa).

The protein belongs to the universal ribosomal protein uL29 family.

The sequence is that of Large ribosomal subunit protein uL29 from Lactobacillus delbrueckii subsp. bulgaricus (strain ATCC 11842 / DSM 20081 / BCRC 10696 / JCM 1002 / NBRC 13953 / NCIMB 11778 / NCTC 12712 / WDCM 00102 / Lb 14).